The following is a 123-amino-acid chain: Small ribosomal subunit protein uS12 (123 aa).

The residue at position 89 (Asp-89) is a 3-methylthioaspartic acid.

It belongs to the universal ribosomal protein uS12 family. As to quaternary structure, part of the 30S ribosomal subunit. Contacts proteins S8 and S17. May interact with IF1 in the 30S initiation complex.

Functionally, with S4 and S5 plays an important role in translational accuracy. Its function is as follows. Interacts with and stabilizes bases of the 16S rRNA that are involved in tRNA selection in the A site and with the mRNA backbone. Located at the interface of the 30S and 50S subunits, it traverses the body of the 30S subunit contacting proteins on the other side and probably holding the rRNA structure together. The combined cluster of proteins S8, S12 and S17 appears to hold together the shoulder and platform of the 30S subunit. This chain is Small ribosomal subunit protein uS12, found in Chelativorans sp. (strain BNC1).